The primary structure comprises 179 residues: Replication restart protein DnaT (179 aa).

The interval Gly156–Gly179 is disordered.

It belongs to the DnaT family. Homooligomerizes. Interacts with PriB. Component of the replication restart primosome. Primosome assembly occurs via a 'hand-off' mechanism. PriA binds to replication forks, subsequently PriB then DnaT bind; DnaT then displaces ssDNA to generate the helicase loading substrate.

In terms of biological role, involved in the restart of stalled replication forks, which reloads the replicative helicase on sites other than the origin of replication. Can function in multiple replication restart pathways. Displaces ssDNA from a PriB-ssDNA complex. Probably forms a spiral filament on ssDNA. In Escherichia coli O7:K1 (strain IAI39 / ExPEC), this protein is Replication restart protein DnaT.